The chain runs to 81 residues: Pyruvate synthase subunit PorD (81 aa).

The tract at residues 1–20 is disordered; it reads MESLGATVKEPGSTRKNKTG. 2 consecutive 4Fe-4S ferredoxin-type domains span residues 25 to 54 and 51 to 80; these read FKPFLDKDKCIDCDNCILFCPEGCIDKEHE and KEHEIDYDYCKGCGICAEECPVKAIKMERE. Residues Cys-34, Cys-37, Cys-40, Cys-44, Cys-60, Cys-63, Cys-66, and Cys-70 each contribute to the [4Fe-4S] cluster site.

As to quaternary structure, heterotetramer of one alpha, one beta, one delta and one gamma chain. The cofactor is [4Fe-4S] cluster.

The sequence is that of Pyruvate synthase subunit PorD (porD) from Methanothermobacter marburgensis (strain ATCC BAA-927 / DSM 2133 / JCM 14651 / NBRC 100331 / OCM 82 / Marburg) (Methanobacterium thermoautotrophicum).